Here is a 435-residue protein sequence, read N- to C-terminus: Elongation factor 1-alpha (435 aa).

A tr-type G domain is found at 5–226 (KTHINLVVIG…DTMEPPKRPT (222 aa)). Residues 14–21 (GHVDSGKS) form a G1 region. Position 14 to 21 (14 to 21 (GHVDSGKS)) interacts with GTP. A G2 region spans residues 70–74 (GITID). Residues 91–94 (DAPG) form a G3 region. GTP contacts are provided by residues 91–95 (DAPGH) and 151–154 (NKMD). The interval 151-154 (NKMD) is G4. The tract at residues 190 to 192 (SGF) is G5.

This sequence belongs to the TRAFAC class translation factor GTPase superfamily. Classic translation factor GTPase family. EF-Tu/EF-1A subfamily.

It is found in the cytoplasm. Its function is as follows. This protein promotes the GTP-dependent binding of aminoacyl-tRNA to the A-site of ribosomes during protein biosynthesis. The protein is Elongation factor 1-alpha of Cryptosporidium parvum.